The sequence spans 360 residues: Phospho-N-acetylmuramoyl-pentapeptide-transferase (360 aa).

10 helical membrane passes run G27–L47, T72–A92, L94–F114, L135–P155, G167–S187, G199–V219, A236–F256, I263–A283, V289–V309, and Q337–L357.

Belongs to the glycosyltransferase 4 family. MraY subfamily. Requires Mg(2+) as cofactor.

Its subcellular location is the cell inner membrane. It carries out the reaction UDP-N-acetyl-alpha-D-muramoyl-L-alanyl-gamma-D-glutamyl-meso-2,6-diaminopimeloyl-D-alanyl-D-alanine + di-trans,octa-cis-undecaprenyl phosphate = di-trans,octa-cis-undecaprenyl diphospho-N-acetyl-alpha-D-muramoyl-L-alanyl-D-glutamyl-meso-2,6-diaminopimeloyl-D-alanyl-D-alanine + UMP. It functions in the pathway cell wall biogenesis; peptidoglycan biosynthesis. Catalyzes the initial step of the lipid cycle reactions in the biosynthesis of the cell wall peptidoglycan: transfers peptidoglycan precursor phospho-MurNAc-pentapeptide from UDP-MurNAc-pentapeptide onto the lipid carrier undecaprenyl phosphate, yielding undecaprenyl-pyrophosphoryl-MurNAc-pentapeptide, known as lipid I. The chain is Phospho-N-acetylmuramoyl-pentapeptide-transferase from Beijerinckia indica subsp. indica (strain ATCC 9039 / DSM 1715 / NCIMB 8712).